The chain runs to 131 residues: CLAVATA3/ESR (CLE)-related protein ESR1 (131 aa).

The first 26 residues, 1 to 26 (MASRMGMVAIVSLFVCALAASTSVNA), serve as a signal peptide directing secretion. Residues 49–131 (RQQQQGGFIG…IGPPPLSDRY (83 aa)) are disordered. Residues Pro81 and Pro84 each carry the hydroxyproline modification. An O-linked (Ara...) hydroxyproline glycan is attached at Pro84.

Belongs to the CLV3/ESR signal peptide family. The O-glycosylation (arabinosylation) of the hydroxyproline Pro-84 enhances binding affinity of the ESR1p peptide for its receptor. In terms of tissue distribution, seed endosperm.

The protein resides in the secreted. It localises to the extracellular space. In terms of biological role, extracellular signal peptide that regulates cell fate. This is CLAVATA3/ESR (CLE)-related protein ESR1 from Zea mays (Maize).